Reading from the N-terminus, the 1091-residue chain is Sodium/potassium exporting P-type ATPase 1 (1091 aa).

The Cytoplasmic segment spans residues 1-63; it reads MGEGTTKENN…LGDDTKIDYK (63 aa). Residues 64-84 traverse the membrane as a helical segment; sequence AMVLHQVCNAMIMVLLISMII. Over 85–90 the chain is Extracellular; the sequence is SFAMHD. Residues 91 to 111 traverse the membrane as a helical segment; that stretch reads WITGGVISFVIAVNVLIGLVQ. The Cytoplasmic segment spans residues 112–282; the sequence is EYKATKTMNS…TNVGTPLHRK (171 aa). Residues 283–303 traverse the membrane as a helical segment; it reads LSKLAVLLFWIAVLFAIIVMA. The Extracellular segment spans residues 304–312; that stretch reads SQKFDVDKR. A helical transmembrane segment spans residues 313–333; it reads VAIYAICVALSMIPSSLVVVL. At 334 to 815 the chain is on the cytoplasmic side; the sequence is TITMSVGAAV…RRMTDNIQKF (482 aa). The 4-aspartylphosphate intermediate role is filled by Asp369. Mg(2+)-binding residues include Asp369 and Thr371. Positions 371 and 483 each coordinate ATP. A disordered region spans residues 499–525; it reads ALTGEKSTNQSNENDQSSLSQHNEKPG. Over residues 503 to 519 the composition is skewed to polar residues; it reads EKSTNQSNENDQSSLSQ. ATP-binding residues include Lys561, Arg606, Thr673, Gly674, Asp675, Arg732, and Lys738. Asp757 contributes to the Mg(2+) binding site. Asn760 is an ATP binding site. The chain crosses the membrane as a helical span at residues 816–836; it reads VLQLLAENVAQALYLIIGLVF. At 837-848 the chain is on the extracellular side; it reads RDENGKSVFPLS. A helical transmembrane segment spans residues 849–869; the sequence is PVEVLWIIVVTSCFPAMGLGL. Residues 870-885 are Cytoplasmic-facing; it reads EKAAPDLMDRPPHDSE. The chain crosses the membrane as a helical span at residues 886-906; it reads VGIFTWEVIIDTFAYGIIMTG. The Extracellular portion of the chain corresponds to 907-943; it reads SCMASFTGSLYGINSGRLGHDCDGTYNSSCRDVYRSR. The chain crosses the membrane as a helical span at residues 944 to 964; it reads SAAFATMTWCALILAWEVVDM. Over 965-991 the chain is Cytoplasmic; sequence RRSFFRMHPDTDSPVKEFFRSIWGNQF. A helical membrane pass occupies residues 992–1012; it reads LFWSIIFGFVSAFPVVYIPVI. Topologically, residues 1013–1021 are extracellular; that stretch reads NDKVFLHKP. Residues 1022–1042 traverse the membrane as a helical segment; the sequence is IGAEWGLAIAFTIAFWIGAEL. The Cytoplasmic portion of the chain corresponds to 1043 to 1091; that stretch reads YKCGKRRYFKTQRAHNPENDLESNNKRDPFEAYSTSTTIHTEVNIGIKQ.

The protein belongs to the cation transport ATPase (P-type) (TC 3.A.3) family. Type IID subfamily. Requires Mg(2+) as cofactor. In terms of processing, the active site is phosphorylated in presence of sodium or potassium and in conditions of higher pH. Not phosphorylated in presence of calcium ions.

Its subcellular location is the cell membrane. It carries out the reaction Na(+)(in) + ATP + H2O = Na(+)(out) + ADP + phosphate + H(+). The enzyme catalyses K(+)(in) + ATP + H2O = K(+)(out) + ADP + phosphate + H(+). Catalyzes the hydrolysis of ATP coupled with the export of sodium and potassium from the cell. May export potassium less efficiently. May transport other cations such as lithium. Sodium/potassium efflux ATPases are involved in salt tolerance and maintaining the membrane potential across the plasma membrane in high salinity (Na+) or alkaline (K+) environments. Is negatively modulated by SIS2/HAL3. The protein is Sodium/potassium exporting P-type ATPase 1 of Saccharomyces cerevisiae (strain ATCC 204508 / S288c) (Baker's yeast).